The following is a 578-amino-acid chain: Arginine--tRNA ligase (578 aa).

A 'HIGH' region motif is present at residues 127–137 (PNLAKEMHVGH).

Belongs to the class-I aminoacyl-tRNA synthetase family. As to quaternary structure, monomer.

The protein resides in the cytoplasm. The enzyme catalyses tRNA(Arg) + L-arginine + ATP = L-arginyl-tRNA(Arg) + AMP + diphosphate. The protein is Arginine--tRNA ligase of Pseudomonas savastanoi pv. phaseolicola (strain 1448A / Race 6) (Pseudomonas syringae pv. phaseolicola (strain 1448A / Race 6)).